A 709-amino-acid polypeptide reads, in one-letter code: MEKTFNLTRREDGIAILTMDVPGETMNTLKAEFGPEISEILSEIKRDSSIRGLVLISGKKDSFVAGADISMLDACQTAGDAKALSQQGHVVFNELEALNIPVVAAIHGACLGGGLELALACHQRVCSDDGKTMLGVPEVQLGLLPGGGGTQRLPRLVGITTALDMMLTGKQIRPKQALKMGLVNDVVPQTILLQTAVEMALAGKRTAKPVKKSLVNQLLEGTGFGRNIIFDQAAKQVAKKTQGNYPAPAKIIDCVRQGMAKGMQKGLEVEASHFAELVVSKESEALRSIFFATTEMKKETGAEGATPRKVKKAVILGGGLMGGGIASVTTTKAKIPARVKDINEKGLSNALSYAYKLLDKGVKRRHMTPAVRDNLMALMTTTTEYKGVKDADIVVEAVFEDLALKHQMVKDIERECGEHTIFASNTSSLPIGQIAQAASRPENVIGLHYFSPVEKMPLVEVIAHAKTSPETIATTVAFARKQGKTPIVVQDGAGFYVNRILALYMNEAAQLLLEGQSIEHLDKALVKFGFPVGPITLLDEVGIDVGAKIAPILEKELGERFKAPAAFDKLLSDDRKGRKNGKGFYQYAAGNKAPSKKKAVDESVYGVLGIKPGIDKEMSAVAERCVVQMLNEAVRCLDDGIIASPRDGDIGAIFGIGFPPFLGGPFHYIDTLGADNLVKILERYQAQYGDRFEPCPRLKEMAAEKTRFF.

The segment at 1 to 188 is enoyl-CoA hydratase; the sequence is MEKTFNLTRR…KMGLVNDVVP (188 aa). Residues 308 to 709 are 3-hydroxyacyl-CoA dehydrogenase; sequence RKVKKAVILG…EMAAEKTRFF (402 aa).

In the N-terminal section; belongs to the enoyl-CoA hydratase/isomerase family. This sequence in the central section; belongs to the 3-hydroxyacyl-CoA dehydrogenase family. As to quaternary structure, heterotetramer of two alpha chains (FadJ) and two beta chains (FadI).

It localises to the cytoplasm. The catalysed reaction is a (3S)-3-hydroxyacyl-CoA = a (2E)-enoyl-CoA + H2O. It carries out the reaction a 4-saturated-(3S)-3-hydroxyacyl-CoA = a (3E)-enoyl-CoA + H2O. It catalyses the reaction a (3S)-3-hydroxyacyl-CoA + NAD(+) = a 3-oxoacyl-CoA + NADH + H(+). The enzyme catalyses (3S)-3-hydroxybutanoyl-CoA = (3R)-3-hydroxybutanoyl-CoA. Its pathway is lipid metabolism; fatty acid beta-oxidation. Its function is as follows. Catalyzes the formation of a hydroxyacyl-CoA by addition of water on enoyl-CoA. Also exhibits 3-hydroxyacyl-CoA epimerase and 3-hydroxyacyl-CoA dehydrogenase activities. This is Fatty acid oxidation complex subunit alpha from Shewanella sp. (strain MR-4).